The primary structure comprises 159 residues: 2-C-methyl-D-erythritol 2,4-cyclodiphosphate synthase (159 aa).

A divalent metal cation contacts are provided by D10 and H12. 4-CDP-2-C-methyl-D-erythritol 2-phosphate contacts are provided by residues 10 to 12 (DVH) and 36 to 37 (HS). H44 lines the a divalent metal cation pocket. 4-CDP-2-C-methyl-D-erythritol 2-phosphate contacts are provided by residues 58 to 60 (DIG), 63 to 67 (FSDTD), and R144.

This sequence belongs to the IspF family. Homotrimer. A divalent metal cation is required as a cofactor.

The catalysed reaction is 4-CDP-2-C-methyl-D-erythritol 2-phosphate = 2-C-methyl-D-erythritol 2,4-cyclic diphosphate + CMP. The protein operates within isoprenoid biosynthesis; isopentenyl diphosphate biosynthesis via DXP pathway; isopentenyl diphosphate from 1-deoxy-D-xylulose 5-phosphate: step 4/6. Involved in the biosynthesis of isopentenyl diphosphate (IPP) and dimethylallyl diphosphate (DMAPP), two major building blocks of isoprenoid compounds. Catalyzes the conversion of 4-diphosphocytidyl-2-C-methyl-D-erythritol 2-phosphate (CDP-ME2P) to 2-C-methyl-D-erythritol 2,4-cyclodiphosphate (ME-CPP) with a corresponding release of cytidine 5-monophosphate (CMP). This Paraburkholderia phytofirmans (strain DSM 17436 / LMG 22146 / PsJN) (Burkholderia phytofirmans) protein is 2-C-methyl-D-erythritol 2,4-cyclodiphosphate synthase.